The following is a 640-amino-acid chain: Ribonuclease J (640 aa).

Positions 75, 77, 79, 80, 145, and 167 each coordinate Zn(2+). A substrate-binding site is contributed by 368-372 (HVSGH). Residue His394 participates in Zn(2+) binding. Residues 578–640 (TVSATSATPA…RKRSTTSVSS (63 aa)) are disordered. Residues 598-610 (PEPKVKAKPEKKV) show a composition bias toward basic and acidic residues.

The protein belongs to the metallo-beta-lactamase superfamily. RNA-metabolizing metallo-beta-lactamase-like family. Bacterial RNase J subfamily. In terms of assembly, homodimer, may be a subunit of the RNA degradosome. The cofactor is Zn(2+).

The protein resides in the cytoplasm. Functionally, an RNase that has 5'-3' exonuclease and possibly endoonuclease activity. Involved in maturation of rRNA and in some organisms also mRNA maturation and/or decay. In Synechocystis sp. (strain ATCC 27184 / PCC 6803 / Kazusa), this protein is Ribonuclease J.